A 527-amino-acid chain; its full sequence is Probable glucomannan 4-beta-mannosyltransferase 9 (527 aa).

A helical membrane pass occupies residues 37-59; that stretch reads AMSVMLFVEKVYMSVVLVGVHLF. The active site involves Asp131. Substrate-binding residues include Asp190 and Asp192. The active site involves Asp284. A run of 4 helical transmembrane segments spans residues 363–383, 399–419, 478–498, and 505–525; these read IIGH…TVLI, IVTI…IFWV, ALEL…IAYG, and FLFL…GTIV.

This sequence belongs to the glycosyltransferase 2 family. Plant cellulose synthase-like A subfamily.

The protein localises to the golgi apparatus membrane. It carries out the reaction GDP-mannose + (glucomannan)n = GDP + (glucomannan)n+1.. Its function is as follows. Probable mannan synthase which consists of a 4-beta-mannosyltransferase activity on mannan using GDP-mannose. The beta-1,4-mannan product is the backbone for galactomannan synthesis by galactomannan galactosyltransferase. Galactomannan is a noncellulosic polysaccharides of plant cell wall. The polypeptide is Probable glucomannan 4-beta-mannosyltransferase 9 (Oryza sativa subsp. japonica (Rice)).